A 483-amino-acid polypeptide reads, in one-letter code: MIEQAVADLWLPIAVLIMRASWVSPRKGQANVSQMHYARQGVVTEEMAYVAKRENLPESLVMEEVARGRMIIPANINHTGLEPMAIGIASKCKVNANIGASPNASDAAEEVNKLKLAVKYGADTVMDLSTGGVNLDEVRTAIIDASPVPIGTVPVYQALESVHGSIEKLDEDDFLHIIEKHCQQGVDYQTIHAGLLIEHLPKVKGRLTGIVSRGGGILAQWMLYHHRQNPLYTRFDDICEIFKRYDCTFSLGDSLRPGCQHDASDAAQLAELKTLGELTRRAWKHDVQVMVEGPGHVPLDQIEFNVKKQMEECNEAPFYVLGPLVTDIAPGYDHITSAIGAAMAGWHGTAMLCYVTPKEHLGLPNAEDVREGLIAYKIAAHAADIARHRPGARDRDDELSRARYNFDWNKQFELSLDPERAKEYHDETLPADIYKQAEFCSMCGPKHCPMQTKITEEDIEGLEKVLEARGAAELTPVKLDKAD.

Substrate contacts are provided by residues Asn97, Met126, Tyr156, His192, 212-214 (SRG), 253-256 (DSLR), and Glu292. His296 lines the Zn(2+) pocket. Residue Tyr319 participates in substrate binding. Position 360 (His360) interacts with Zn(2+). Residues Cys440, Cys443, and Cys448 each contribute to the [4Fe-4S] cluster site.

It belongs to the ThiC family. Requires [4Fe-4S] cluster as cofactor.

The catalysed reaction is 5-amino-1-(5-phospho-beta-D-ribosyl)imidazole + S-adenosyl-L-methionine = 4-amino-2-methyl-5-(phosphooxymethyl)pyrimidine + CO + 5'-deoxyadenosine + formate + L-methionine + 3 H(+). Its pathway is cofactor biosynthesis; thiamine diphosphate biosynthesis. Catalyzes the synthesis of the hydroxymethylpyrimidine phosphate (HMP-P) moiety of thiamine from aminoimidazole ribotide (AIR) in a radical S-adenosyl-L-methionine (SAM)-dependent reaction. The sequence is that of Phosphomethylpyrimidine synthase from Parasynechococcus marenigrum (strain WH8102).